A 370-amino-acid polypeptide reads, in one-letter code: MQQDKVNLLGLNQKAIEDFFISIGKKKFHARQVFKWIHKKGVIDFDAMTDLGKNLRHKLKDKAQITIPKVVFSKASKDGTHKWLIDVGGSAVETVFIPEEGRGTLCVSSQIGCTLNCSFCSTGKQGFNRNLSAAEVIAQLWIAARTLSKTDGEHDFTVTNIVMMGMGEPLMNFENVVPAMDIMMDDLAYGLSRRKVTLSTSGVVPRIYDLLEQSGVSLAVSLHTPNDMLRNEIVPINKKYNIDELLEACKLYAQKGPHKHITFEYTLMEEVNDNLSDAEELVALLKSREVPAKINLIPFNPYPGTPYKKPSNNRIHRFKEFLQHNGFVTTVRKTRGDDIDAACGQLAGDVMDKTNRKQRYLKKLGDTNAN.

Glu93 acts as the Proton acceptor in catalysis. Residues 99–337 (EEGRGTLCVS…VTTVRKTRGD (239 aa)) form the Radical SAM core domain. Cys106 and Cys343 are joined by a disulfide. Positions 113, 117, and 120 each coordinate [4Fe-4S] cluster. S-adenosyl-L-methionine is bound by residues 167 to 168 (GE), Ser199, 221 to 223 (SLH), and Asn300. Cys343 functions as the S-methylcysteine intermediate in the catalytic mechanism.

This sequence belongs to the radical SAM superfamily. RlmN family. [4Fe-4S] cluster serves as cofactor.

It is found in the cytoplasm. The enzyme catalyses adenosine(2503) in 23S rRNA + 2 reduced [2Fe-2S]-[ferredoxin] + 2 S-adenosyl-L-methionine = 2-methyladenosine(2503) in 23S rRNA + 5'-deoxyadenosine + L-methionine + 2 oxidized [2Fe-2S]-[ferredoxin] + S-adenosyl-L-homocysteine. It catalyses the reaction adenosine(37) in tRNA + 2 reduced [2Fe-2S]-[ferredoxin] + 2 S-adenosyl-L-methionine = 2-methyladenosine(37) in tRNA + 5'-deoxyadenosine + L-methionine + 2 oxidized [2Fe-2S]-[ferredoxin] + S-adenosyl-L-homocysteine. In terms of biological role, specifically methylates position 2 of adenine 2503 in 23S rRNA and position 2 of adenine 37 in tRNAs. m2A2503 modification seems to play a crucial role in the proofreading step occurring at the peptidyl transferase center and thus would serve to optimize ribosomal fidelity. The protein is Dual-specificity RNA methyltransferase RlmN of Francisella tularensis subsp. holarctica (strain LVS).